The sequence spans 71 residues: DNA-directed RNA polymerases I, II, and III subunit RPABC5 (71 aa).

The Zn(2+) site is built by Cys-7, Cys-10, Cys-44, and Cys-45.

The protein belongs to the archaeal Rpo10/eukaryotic RPB10 RNA polymerase subunit family. In terms of assembly, component of the RNA polymerase I (Pol I), RNA polymerase II (Pol II) and RNA polymerase III (Pol III) complexes consisting of at least 13, 12 and 17 subunits, respectively.

The protein resides in the nucleus. Its function is as follows. DNA-dependent RNA polymerase catalyzes the transcription of DNA into RNA using the four ribonucleoside triphosphates as substrates. Common component of RNA polymerases I, II and III which synthesize ribosomal RNA precursors, mRNA precursors and many functional non-coding RNAs, and a small RNAs, such as 5S rRNA and tRNAs, respectively. Pol II is the central component of the basal RNA polymerase II transcription machinery. Pols are composed of mobile elements that move relative to each other. In Pol II, RBP10 is part of the core element with the central large cleft. The polypeptide is DNA-directed RNA polymerases I, II, and III subunit RPABC5 (Brassica napus (Rape)).